The following is a 908-amino-acid chain: Translation initiation factor IF-2 (908 aa).

Disordered regions lie at residues 52–229 and 241–316; these read QSHG…AEEA and AGQY…SAQH. Over residues 65–84 the composition is skewed to polar residues; the sequence is KSKTTSTARVTGSSGKSKSV. Basic and acidic residues-rich tracts occupy residues 94 to 108, 120 to 138, 176 to 185, 193 to 229, 270 to 280, and 294 to 303; these read FEKP…ELAA, AAKD…EERQ, IEVKPKEQPK, PKVE…AEEA, SFEKERREIKR, and KNQDEREIKN. The region spanning 409-578 is the tr-type G domain; that stretch reads TRPPVVTIMG…SLQAELMELE (170 aa). A G1 region spans residues 418 to 425; sequence GHVDHGKT. 418–425 is a binding site for GTP; it reads GHVDHGKT. The segment at 443-447 is G2; it reads GITQH. The interval 464 to 467 is G3; it reads DTPG. GTP-binding positions include 464–468 and 518–521; these read DTPGH and NKMD. Residues 518 to 521 form a G4 region; sequence NKMD. Positions 554–556 are G5; sequence SAK.

Belongs to the TRAFAC class translation factor GTPase superfamily. Classic translation factor GTPase family. IF-2 subfamily.

Its subcellular location is the cytoplasm. In terms of biological role, one of the essential components for the initiation of protein synthesis. Protects formylmethionyl-tRNA from spontaneous hydrolysis and promotes its binding to the 30S ribosomal subunits. Also involved in the hydrolysis of GTP during the formation of the 70S ribosomal complex. The sequence is that of Translation initiation factor IF-2 from Psychrobacter arcticus (strain DSM 17307 / VKM B-2377 / 273-4).